A 1984-amino-acid polypeptide reads, in one-letter code: Vitellogenin receptor Yl (1984 aa).

A compositionally biased stretch (basic and acidic residues) spans 1–19 (MCQAEHQVHPSEQRIRVES). Positions 1-48 (MCQAEHQVHPSEQRIRVESPKMTASRRGFNLTSQTRAHPSSGGSTSSR) are disordered. N30 is a glycosylation site (N-linked (GlcNAc...) asparagine). The segment covering 30–48 (NLTSQTRAHPSSGGSTSSR) has biased composition (polar residues). 5 consecutive LDL-receptor class A domains span residues 89 to 125 (RCDAGQFQCRDGGCILQAKMCDGRGDCKDSSDELDCD), 128 to 167 (LCRPPHWFPCAQPHGACLAAELMCNGIDNCPGGEDELNCP), 183 to 221 (SCSKYEFMCQQDRTCIPIDFMCDGRPDCTDKSDEVAGCK), 226 to 263 (TCPGEGHLCANGRCLRRKQWVCDGVDDCGDGSDERGCL), and 265 to 305 (LCEP…DLCH). 20 disulfide bridges follow: C90/C102, C97/C115, C109/C124, C129/C144, C137/C157, C151/C166, C184/C197, C191/C210, C204/C220, C227/C239, C234/C253, C247/C262, C266/C281, C275/C294, C288/C304, C310/C321, C315/C331, C352/C363, C359/C372, and C374/C387. An EGF-like 1 domain is found at 306–343 (SKPDCDAKKCALGAKCHMMPASGAECFCPKGFRLAKFE). The EGF-like 2; calcium-binding domain maps to 348-388 (DVDECKEQDDLCSQGCENTSGGYRCVCDAGYLLDKDNRTCR). N-linked (GlcNAc...) asparagine glycans are attached at residues N365, N384, and N429. LDL-receptor class B repeat units lie at residues 441–485 (SHIY…DWLT), 486–528 (QNIY…WPQK), 529–572 (GLMF…DMHQ), and 573–615 (QRIY…FEDQ). N-linked (GlcNAc...) asparagine glycans are attached at residues N666, N749, and N782. LDL-receptor class B repeat units lie at residues 750-792 (GSLI…DHLS), 793-836 (RNLY…MPAE), 884-925 (QTIF…VHHD), and 934-940 (PRIYWTH). N-linked (GlcNAc...) asparagine glycosylation occurs at N1022. LDL-receptor class A domains follow at residues 1024-1063 (TCVEALDCEFRCHSGECLTMNHRCNGRRDCVDNSDEMNCD), 1073-1110 (LCSPNQFACHSGEQCVDKERRCDNRKDCHDHSDEQHCE), 1117-1153 (KCHVHQHGCDNGKCVDSSLVCDGTNDCGDNSDELLCE), 1157-1194 (RCEPGMFQCGSGSCIAGSWECDGRIDCSDGSDEHDKCV), and 1197-1233 (SCPPDMQRCLLGQCLDRSLVCDGHNDCGDKSDELNCG). 15 disulfide bridges follow: C1025–C1040, C1035–C1053, C1047–C1062, C1074–C1087, C1081–C1100, C1094–C1109, C1118–C1130, C1125–C1143, C1137–C1152, C1158–C1170, C1165–C1183, C1177–C1193, C1198–C1210, C1205–C1223, and C1217–C1232. The N-linked (GlcNAc...) asparagine glycan is linked to N1240. LDL-receptor class A domains follow at residues 1242 to 1280 (SCAEDQYQCTSNLKICLPSTVRCNGTTECPRGEDEADCG) and 1282 to 1319 (VCSIYEFKCRSGRECIRREFRCDGQKDCGDGSDELSCE). Intrachain disulfides connect C1243–C1257, C1250–C1270, C1264–C1279, C1283–C1296, C1290–C1309, and C1303–C1318. A glycan (N-linked (GlcNAc...) asparagine) is linked at N1265. N1326 carries an N-linked (GlcNAc...) asparagine glycan. One can recognise an LDL-receptor class A 13 domain in the interval 1339–1376 (SCRPHLFDCQDGECVDLSRVCNNFPDCTNGHDEGPKCA). Disulfide bonds link C1340/C1352, C1347/C1365, C1359/C1375, C1422/C1432, and C1428/C1441. An EGF-like 3; calcium-binding domain is found at 1418–1453 (DIDECQEQQPCAQLCENTLGGYQCQCHADFMLRQDR). N-linked (GlcNAc...) asparagine glycans are attached at residues N1475 and N1490. LDL-receptor class B repeat units follow at residues 1588 to 1637 (ARIF…DPHQ) and 1638 to 1687 (QLLY…YENN). A helical transmembrane segment spans residues 1800 to 1820 (WLMALFVLAAGSLIAGLGYMY). Residues 1821–1984 (YQYRQRGHTD…GNDANARFVS (164 aa)) lie on the Cytoplasmic side of the membrane. A Phosphoserine modification is found at S1926. 2 disordered regions span residues 1927–1951 (KLHALDGGGAGGDGDGGRGVGRQVP) and 1965–1984 (SAGQFGGNYAGNDANARFVS). The span at 1932 to 1946 (DGGGAGGDGDGGRGV) shows a compositional bias: gly residues.

This sequence belongs to the LDLR family. As to quaternary structure, interacts with osk (isoform A). In terms of tissue distribution, ovary.

It localises to the cell membrane. The protein resides in the cytoplasm. Its subcellular location is the cell cortex. It is found in the cytoplasmic vesicle. The protein localises to the clathrin-coated vesicle membrane. It localises to the early endosome membrane. The protein resides in the endosome. Its subcellular location is the multivesicular body lumen. Cell surface receptor involved in uptake of vitellogenins (yolk proteins) into developing oocytes by receptor-mediated endocytosis. May also mediate uptake of apolpp/apolipophorins and their incorporation into yolk granules. Along with its ligands, required for maintenance of microtubule plus-end orientation towards the posterior pole of oocytes. Involved in polarized localization of germ plasm components, such as osk mRNA and vas protein, to the oocyte posterior cortex. Receptor-mediated endocytosis of vitellogenin receptor ligands is critical for osk (isoform A) mediated actin reorganization and the anchoring of germ plasm components to the oocyte cortex. The protein is Vitellogenin receptor Yl of Drosophila melanogaster (Fruit fly).